The primary structure comprises 264 residues: ATP synthase subunit a (264 aa).

7 helical membrane passes run 29-49 (TWHIDSLLFSVGLGVLFLWIF), 90-110 (IAPLALTIFVWVFMMNFMDMI), 111-131 (PVDWLPSLALLAGVEYLKVVP), 134-154 (DVNITFSLAIGVFVLIIYYSI), 177-197 (IPVNLLLESVTLIAKPISLAL), 208-228 (LIFILIALMYSANWAMATLGV), and 235-255 (LIFHILVITLQAFIFMMLTIV).

The protein belongs to the ATPase A chain family. In terms of assembly, F-type ATPases have 2 components, CF(1) - the catalytic core - and CF(0) - the membrane proton channel. CF(1) has five subunits: alpha(3), beta(3), gamma(1), delta(1), epsilon(1). CF(0) has three main subunits: a(1), b(2) and c(9-12). The alpha and beta chains form an alternating ring which encloses part of the gamma chain. CF(1) is attached to CF(0) by a central stalk formed by the gamma and epsilon chains, while a peripheral stalk is formed by the delta and b chains.

It is found in the cell inner membrane. Key component of the proton channel; it plays a direct role in the translocation of protons across the membrane. In Shewanella denitrificans (strain OS217 / ATCC BAA-1090 / DSM 15013), this protein is ATP synthase subunit a.